Consider the following 324-residue polypeptide: PDZ domain-containing protein MAGIX (324 aa).

The segment at 1–26 (MDSRAGNTADPRGGRRGGGLQGSRSP) is disordered. A PDZ domain is found at 128–212 (SVELTRGPAG…HLCLVLQRPQ (85 aa)). The span at 216-241 (GSRIKEVGGHRKTDRSLDPRGSRVES) shows a compositional bias: basic and acidic residues. Positions 216 to 263 (GSRIKEVGGHRKTDRSLDPRGSRVESRSTISPVHHRPKTRTSPRPSPE) are disordered. Residue Ser261 is modified to Phosphoserine.

This chain is PDZ domain-containing protein MAGIX (Magix), found in Mus musculus (Mouse).